Consider the following 573-residue polypeptide: 2-succinyl-5-enolpyruvyl-6-hydroxy-3-cyclohexene-1-carboxylate synthase (573 aa).

The protein belongs to the TPP enzyme family. MenD subfamily. Homodimer. Mg(2+) serves as cofactor. Mn(2+) is required as a cofactor. Requires thiamine diphosphate as cofactor.

The catalysed reaction is isochorismate + 2-oxoglutarate + H(+) = 5-enolpyruvoyl-6-hydroxy-2-succinyl-cyclohex-3-ene-1-carboxylate + CO2. Its pathway is quinol/quinone metabolism; 1,4-dihydroxy-2-naphthoate biosynthesis; 1,4-dihydroxy-2-naphthoate from chorismate: step 2/7. It participates in quinol/quinone metabolism; menaquinone biosynthesis. Functionally, catalyzes the thiamine diphosphate-dependent decarboxylation of 2-oxoglutarate and the subsequent addition of the resulting succinic semialdehyde-thiamine pyrophosphate anion to isochorismate to yield 2-succinyl-5-enolpyruvyl-6-hydroxy-3-cyclohexene-1-carboxylate (SEPHCHC). This chain is 2-succinyl-5-enolpyruvyl-6-hydroxy-3-cyclohexene-1-carboxylate synthase, found in Shewanella putrefaciens (strain CN-32 / ATCC BAA-453).